Reading from the N-terminus, the 415-residue chain is Histidine--tRNA ligase (415 aa).

This sequence belongs to the class-II aminoacyl-tRNA synthetase family. In terms of assembly, homodimer.

It is found in the cytoplasm. The enzyme catalyses tRNA(His) + L-histidine + ATP = L-histidyl-tRNA(His) + AMP + diphosphate + H(+). This Phytoplasma australiense protein is Histidine--tRNA ligase.